The primary structure comprises 835 residues: Ion-translocating oxidoreductase complex subunit C (835 aa).

4Fe-4S ferredoxin-type domains are found at residues 368 to 397 (YAPP…QQLY) and 407 to 436 (KSEE…IQYF). [4Fe-4S] cluster contacts are provided by Cys377, Cys380, Cys383, Cys387, Cys416, Cys419, Cys422, and Cys426. Over residues 468–489 (AREEQERKARAQKAMEARRQEM) the composition is skewed to basic and acidic residues. Disordered stretches follow at residues 468 to 492 (AREE…MKTA), 540 to 574 (QRKA…SKSA), 586 to 618 (KAAQ…AEDP), 634 to 666 (KAAQ…ADDP), 682 to 714 (KAAQ…ADDP), 730 to 762 (KAAQ…AEDP), and 778 to 811 (KAAQ…EDPR). The segment covering 552 to 561 (TQNTDVSQVE) has biased composition (polar residues). Over residues 648–657 (SSSNTLSVGN) the composition is skewed to polar residues. 2 stretches are compositionally biased toward polar residues: residues 745–756 (SSDTLSVGNETE) and 793–804 (SSDTLSVGNETE).

This sequence belongs to the 4Fe4S bacterial-type ferredoxin family. RnfC subfamily. In terms of assembly, the complex is composed of six subunits: RnfA, RnfB, RnfC, RnfD, RnfE and RnfG. The cofactor is [4Fe-4S] cluster.

It localises to the cell inner membrane. In terms of biological role, part of a membrane-bound complex that couples electron transfer with translocation of ions across the membrane. This Pasteurella multocida (strain Pm70) protein is Ion-translocating oxidoreductase complex subunit C.